The following is a 443-amino-acid chain: 3-ketoacyl-CoA thiolase 1, peroxisomal (443 aa).

The N-terminal 30 residues, 1-30, are a transit peptide targeting the peroxisome; sequence MEKATERQRILLRHLQPSSSSDASLSASAC. Cys130 serves as the catalytic Acyl-thioester intermediate. Active-site proton acceptor residues include His385 and Cys417.

It belongs to the thiolase-like superfamily. Thiolase family. Homodimer. As to expression, low levels in seedlings and leaves.

It localises to the peroxisome. It catalyses the reaction an acyl-CoA + acetyl-CoA = a 3-oxoacyl-CoA + CoA. It participates in lipid metabolism; fatty acid metabolism. Its function is as follows. Involved in fatty-acid beta-oxidation prior to gluconeogenesis during germination and subsequent seedling growth. Implicated in jasmonic acid (JA) biosynthesis. This chain is 3-ketoacyl-CoA thiolase 1, peroxisomal (KAT1), found in Arabidopsis thaliana (Mouse-ear cress).